The sequence spans 71 residues: UPF0434 protein Meso_3270 (71 aa).

Belongs to the UPF0434 family.

The polypeptide is UPF0434 protein Meso_3270 (Chelativorans sp. (strain BNC1)).